The sequence spans 674 residues: DNA mismatch repair protein MutL (674 aa).

It belongs to the DNA mismatch repair MutL/HexB family.

Its function is as follows. This protein is involved in the repair of mismatches in DNA. It is required for dam-dependent methyl-directed DNA mismatch repair. May act as a 'molecular matchmaker', a protein that promotes the formation of a stable complex between two or more DNA-binding proteins in an ATP-dependent manner without itself being part of a final effector complex. This is DNA mismatch repair protein MutL from Clostridium perfringens (strain 13 / Type A).